An 83-amino-acid chain; its full sequence is Cell division topological specificity factor (83 aa).

It belongs to the MinE family.

In terms of biological role, prevents the cell division inhibition by proteins MinC and MinD at internal division sites while permitting inhibition at polar sites. This ensures cell division at the proper site by restricting the formation of a division septum at the midpoint of the long axis of the cell. The chain is Cell division topological specificity factor from Acidithiobacillus ferrooxidans (strain ATCC 23270 / DSM 14882 / CIP 104768 / NCIMB 8455) (Ferrobacillus ferrooxidans (strain ATCC 23270)).